A 239-amino-acid polypeptide reads, in one-letter code: Ribonuclease PH (239 aa).

Phosphate is bound by residues Arg87 and 125-127 (GTR).

It belongs to the RNase PH family. In terms of assembly, homohexameric ring arranged as a trimer of dimers.

The catalysed reaction is tRNA(n+1) + phosphate = tRNA(n) + a ribonucleoside 5'-diphosphate. In terms of biological role, phosphorolytic 3'-5' exoribonuclease that plays an important role in tRNA 3'-end maturation. Removes nucleotide residues following the 3'-CCA terminus of tRNAs; can also add nucleotides to the ends of RNA molecules by using nucleoside diphosphates as substrates, but this may not be physiologically important. Probably plays a role in initiation of 16S rRNA degradation (leading to ribosome degradation) during starvation. The sequence is that of Ribonuclease PH from Azotobacter vinelandii (strain DJ / ATCC BAA-1303).